The following is a 540-amino-acid chain: GMP synthase [glutamine-hydrolyzing] (540 aa).

Residues 26 to 216 (LIIILDFGSQ…VYHICDCEPT (191 aa)) enclose the Glutamine amidotransferase type-1 domain. The active-site Nucleophile is cysteine 103. Active-site residues include histidine 190 and glutamate 192. The 199-residue stretch at 217–415 (WTTAAFVEEA…IGLPEEIVQR (199 aa)) folds into the GMPS ATP-PPase domain. Position 244–250 (244–250 (SGGVDSS)) interacts with ATP.

In terms of assembly, homodimer.

It catalyses the reaction XMP + L-glutamine + ATP + H2O = GMP + L-glutamate + AMP + diphosphate + 2 H(+). The protein operates within purine metabolism; GMP biosynthesis; GMP from XMP (L-Gln route): step 1/1. In terms of biological role, catalyzes the synthesis of GMP from XMP. The chain is GMP synthase [glutamine-hydrolyzing] from Nostoc punctiforme (strain ATCC 29133 / PCC 73102).